The following is an 821-amino-acid chain: KN motif and ankyrin repeat domain-containing protein 3 (821 aa).

Residues 1-10 (MAKFALNQNL) are compositionally biased toward polar residues. Disordered stretches follow at residues 1–36 (MAKF…PYSV), 58–184 (GPAA…AQLQ), 224–333 (LLAG…APET), and 385–547 (AAEE…GRCE). A compositionally biased stretch (low complexity) spans 77-88 (RPGLAGARSPGA). Over residues 128–150 (PRVEHTLRETSRRLELAQTHERA) the composition is skewed to basic and acidic residues. The segment covering 151–181 (PSPGRGVPRSPRGSGRSSPAPNLAPASPGPA) has biased composition (low complexity). A phosphoserine mark is found at serine 152, serine 160, serine 164, serine 167, serine 168, and serine 177. Residues 181–230 (AQLQLVREQMAAALRRLRELEDQARTLPELQEQVRALRAEKARLLAGRAQ) adopt a coiled-coil conformation. Positions 237-261 (AETRPDKLAQLRRLTERLATSERGG) are enriched in basic and acidic residues. A phosphoserine mark is found at serine 271, serine 280, and serine 293. Residues 367–404 (GVSELLRGRLRELEEAREAAEEAAAGARAQLREATTQT) adopt a coiled-coil conformation. Low complexity-rich tracts occupy residues 388–400 (EAAA…LREA) and 494–507 (NGGA…SGSG). ANK repeat units lie at residues 622–652 (NGNT…EVNR), 656–690 (AGYS…DVNA), 695–724 (TGQT…DVNA), 728–758 (DGAT…DPAI), and 762–785 (EGTS…LHAH). Residues 784–821 (AHLSSGQPDTQSESPPGSQTATPGEGECGDNGENPQVQ) are disordered. Polar residues predominate over residues 787–805 (SSGQPDTQSESPPGSQTAT).

Strongly expressed in breast, liver, lung, skeletal muscle and kidney.

In terms of biological role, may be involved in the control of cytoskeleton formation by regulating actin polymerization. This is KN motif and ankyrin repeat domain-containing protein 3 from Homo sapiens (Human).